Reading from the N-terminus, the 361-residue chain is MLLELARWLQQLESLFGLFNYLTFRGILAALTALFLSLWMGPAVIRKLAQFKGGQPIRQDGPQTHFSKAGTPTMGGSLILLTVTLSVLLWGDLRNRYVWLVLAVMICFGAIGWYDDWIKIVRRDPNGLKSRWKYLLQSIFGLAAGLFLYYTADVPAAITFYIPMFKAIALPLAGVSFVVIAYFWIVGFSNAVNLTDGLDGLAIMPTVLVACALGVFAYASGNVVFAEYLKIPLIPGAGELIIICSAIAGAGLGFLWFNTYPAMVFMGDIGALSLGAVLGTVAVIVRQELVLVIMGGVFVIETLSVMIQVASFKLTGKRVFRMAPIHHHFELKGWPEPRVIVRFWIISVVLVLIGLATLKVR.

Helical transmembrane passes span 25-45 (RGILAALTALFLSLWMGPAVI), 73-93 (TMGGSLILLTVTLSVLLWGDL), 98-118 (VWLVLAVMICFGAIGWYDDWI), 139-159 (IFGLAAGLFLYYTADVPAAIT), 168-188 (IALPLAGVSFVVIAYFWIVGF), 200-220 (GLAIMPTVLVACALGVFAYAS), 237-257 (AGELIIICSAIAGAGLGFLWF), 264-284 (VFMGDIGALSLGAVLGTVAVI), 289-309 (LVLVIMGGVFVIETLSVMIQV), and 339-359 (VIVRFWIISVVLVLIGLATLK).

The protein belongs to the glycosyltransferase 4 family. MraY subfamily. Mg(2+) is required as a cofactor.

The protein resides in the cell inner membrane. It carries out the reaction UDP-N-acetyl-alpha-D-muramoyl-L-alanyl-gamma-D-glutamyl-meso-2,6-diaminopimeloyl-D-alanyl-D-alanine + di-trans,octa-cis-undecaprenyl phosphate = di-trans,octa-cis-undecaprenyl diphospho-N-acetyl-alpha-D-muramoyl-L-alanyl-D-glutamyl-meso-2,6-diaminopimeloyl-D-alanyl-D-alanine + UMP. Its pathway is cell wall biogenesis; peptidoglycan biosynthesis. In terms of biological role, catalyzes the initial step of the lipid cycle reactions in the biosynthesis of the cell wall peptidoglycan: transfers peptidoglycan precursor phospho-MurNAc-pentapeptide from UDP-MurNAc-pentapeptide onto the lipid carrier undecaprenyl phosphate, yielding undecaprenyl-pyrophosphoryl-MurNAc-pentapeptide, known as lipid I. The protein is Phospho-N-acetylmuramoyl-pentapeptide-transferase of Xanthomonas campestris pv. campestris (strain 8004).